We begin with the raw amino-acid sequence, 202 residues long: Imidazoleglycerol-phosphate dehydratase (202 aa).

It belongs to the imidazoleglycerol-phosphate dehydratase family.

The protein localises to the cytoplasm. The catalysed reaction is D-erythro-1-(imidazol-4-yl)glycerol 3-phosphate = 3-(imidazol-4-yl)-2-oxopropyl phosphate + H2O. The protein operates within amino-acid biosynthesis; L-histidine biosynthesis; L-histidine from 5-phospho-alpha-D-ribose 1-diphosphate: step 6/9. This Corynebacterium efficiens (strain DSM 44549 / YS-314 / AJ 12310 / JCM 11189 / NBRC 100395) protein is Imidazoleglycerol-phosphate dehydratase.